Reading from the N-terminus, the 246-residue chain is Ly6/PLAUR domain-containing protein 4 (246 aa).

Positions 1-26 (MGPQHLRLVQLFCLLGAISTLPRAGA) are cleaved as a signal peptide. Asn117 is a glycosylation site (N-linked (GlcNAc...) asparagine). Positions 142 to 223 (CPTCVGEHMK…LNILEKSQIV (82 aa)) constitute a UPAR/Ly6 domain. The GPI-anchor amidated alanine moiety is linked to residue Ala225. A propeptide spans 226–246 (ASSRQDPAWGVVLGLLFAFRD) (removed in mature form).

The protein resides in the cell membrane. This chain is Ly6/PLAUR domain-containing protein 4 (LYPD4), found in Homo sapiens (Human).